The chain runs to 446 residues: tRNA(Ile2) 2-agmatinylcytidine synthetase TiaS (446 aa).

It belongs to the TiaS family.

It is found in the cytoplasm. The catalysed reaction is cytidine(34) in tRNA(Ile2) + agmatine + ATP + H2O = 2-agmatinylcytidine(34) in tRNA(Ile2) + AMP + 2 phosphate + 2 H(+). Its function is as follows. ATP-dependent agmatine transferase that catalyzes the formation of 2-agmatinylcytidine (agm2C) at the wobble position (C34) of tRNA(Ile2), converting the codon specificity from AUG to AUA. This chain is tRNA(Ile2) 2-agmatinylcytidine synthetase TiaS, found in Cenarchaeum symbiosum (strain A).